The sequence spans 203 residues: Superoxide dismutase [Mn] (203 aa).

Mn(2+) is bound by residues H27, H81, D167, and H171.

It belongs to the iron/manganese superoxide dismutase family. In terms of assembly, homodimer. Requires Mn(2+) as cofactor.

It carries out the reaction 2 superoxide + 2 H(+) = H2O2 + O2. Its function is as follows. Destroys superoxide anion radicals which are normally produced within the cells and which are toxic to biological systems. The polypeptide is Superoxide dismutase [Mn] (sodA) (Buchnera aphidicola subsp. Acyrthosiphon pisum (strain APS) (Acyrthosiphon pisum symbiotic bacterium)).